A 540-amino-acid polypeptide reads, in one-letter code: Chaperonin GroEL (540 aa).

Residues T29–P32, D86–T90, G413, D478–L480, and D494 each bind ATP.

Belongs to the chaperonin (HSP60) family. As to quaternary structure, forms a cylinder of 14 subunits composed of two heptameric rings stacked back-to-back. Interacts with the co-chaperonin GroES.

It is found in the cytoplasm. It catalyses the reaction ATP + H2O + a folded polypeptide = ADP + phosphate + an unfolded polypeptide.. Its function is as follows. Together with its co-chaperonin GroES, plays an essential role in assisting protein folding. The GroEL-GroES system forms a nano-cage that allows encapsulation of the non-native substrate proteins and provides a physical environment optimized to promote and accelerate protein folding. This chain is Chaperonin GroEL, found in Clostridioides difficile (Peptoclostridium difficile).